The sequence spans 85 residues: UPF0386 protein Arad_1912 (85 aa).

The protein belongs to the UPF0386 family.

This is UPF0386 protein Arad_1912 from Rhizobium rhizogenes (strain K84 / ATCC BAA-868) (Agrobacterium radiobacter).